Consider the following 86-residue polypeptide: U15-lycotoxin-Ls1d (86 aa).

A signal peptide spans 1–20; it reads MNSKIFAVLFLLAFLSCVLS. One can recognise a WAP domain in the interval 21–66; the sequence is DQYCPKSSITACKKMNIRNDCCKDDDCTGGSWCCATPCGNFCKYPT. Disulfide bonds link Cys24-Cys54, Cys32-Cys58, Cys41-Cys53, Cys42-Cys80, and Cys47-Cys62.

Belongs to the venom protein 11 family. 01 (wap-1) subfamily. Contains 5 disulfide bonds. As to expression, expressed by the venom gland.

It is found in the secreted. Its function is as follows. Has antibacterial activity. The polypeptide is U15-lycotoxin-Ls1d (Lycosa singoriensis (Wolf spider)).